We begin with the raw amino-acid sequence, 389 residues long: Chalcone synthase 1 (389 aa).

Cys163 is an active-site residue.

It belongs to the thiolase-like superfamily. Chalcone/stilbene synthases family.

The enzyme catalyses (E)-4-coumaroyl-CoA + 3 malonyl-CoA + 3 H(+) = 2',4,4',6'-tetrahydroxychalcone + 3 CO2 + 4 CoA. It participates in secondary metabolite biosynthesis; flavonoid biosynthesis. Functionally, the primary product of this enzyme is 4,2',4',6'-tetrahydroxychalcone (also termed naringenin-chalcone or chalcone) which can under specific conditions spontaneously isomerize into naringenin. This chain is Chalcone synthase 1 (CHS1), found in Citrus sinensis (Sweet orange).